We begin with the raw amino-acid sequence, 555 residues long: Zinc finger and SCAN domain-containing protein 21 (555 aa).

Disordered stretches follow at residues 1-74 (MTKV…SKDK), 102-133 (TIKA…YHDT), 204-243 (LDEP…TQHV), and 263-354 (EEVF…RPAP). 3 repeat units span residues 18–56 (ESMG…QDTL), 57–95 (EPMG…QDTL), and 96–134 (EQLG…HDTP). Residues 18–134 (ESMGPSPIKV…FRQFGYHDTP (117 aa)) form a 3 X 39 AA approximate tandem repeats region. Lysine 26 participates in a covalent cross-link: Glycyl lysine isopeptide (Lys-Gly) (interchain with G-Cter in SUMO2). The SCAN box domain occupies 122–204 (RQRFRQFGYH…TLLEDLEQEL (83 aa)). Residues 210-240 (QVSSPPNEQKQSWEKMSTSGTAMESLSSTET) are compositionally biased toward polar residues. Residues 280 to 302 (PQKEDSADEHRSSEEESHADGLK) show a composition bias toward basic and acidic residues. Glycyl lysine isopeptide (Lys-Gly) (interchain with G-Cter in SUMO2) cross-links involve residues lysine 302 and lysine 313. Basic and acidic residues predominate over residues 316 to 332 (SRSERQWANNLERERGT). 7 C2H2-type zinc fingers span residues 359–381 (YICA…RRTH), 387–409 (YVCT…YRTH), 415–436 (YDCK…QRMH), 442–464 (YQCK…YRIH), 470–492 (YQCN…QRLH), 498–520 (YKCK…HRIH), and 526–548 (YWCS…QRVH). Residue lysine 431 forms a Glycyl lysine isopeptide (Lys-Gly) (interchain with G-Cter in SUMO2) linkage.

Belongs to the krueppel C2H2-type zinc-finger protein family. As to expression, expressed predominantly in the spermatocytes and spermatids of adult testes. It is also present at lower levels in the ovary, brain, spleen, embryo and fetus.

Its subcellular location is the nucleus. Its function is as follows. Strong transcriptional activator. Plays an important role in spermatogenesis; essential for the progression of meiotic prophase I in spermatocytes. This Mus musculus (Mouse) protein is Zinc finger and SCAN domain-containing protein 21 (Zscan21).